The following is a 204-amino-acid chain: Leucyl/phenylalanyl-tRNA--protein transferase (204 aa).

It belongs to the L/F-transferase family.

The protein localises to the cytoplasm. The catalysed reaction is N-terminal L-lysyl-[protein] + L-leucyl-tRNA(Leu) = N-terminal L-leucyl-L-lysyl-[protein] + tRNA(Leu) + H(+). It carries out the reaction N-terminal L-arginyl-[protein] + L-leucyl-tRNA(Leu) = N-terminal L-leucyl-L-arginyl-[protein] + tRNA(Leu) + H(+). It catalyses the reaction L-phenylalanyl-tRNA(Phe) + an N-terminal L-alpha-aminoacyl-[protein] = an N-terminal L-phenylalanyl-L-alpha-aminoacyl-[protein] + tRNA(Phe). Its function is as follows. Functions in the N-end rule pathway of protein degradation where it conjugates Leu, Phe and, less efficiently, Met from aminoacyl-tRNAs to the N-termini of proteins containing an N-terminal arginine or lysine. The polypeptide is Leucyl/phenylalanyl-tRNA--protein transferase (Sinorhizobium medicae (strain WSM419) (Ensifer medicae)).